The following is a 1099-amino-acid chain: ATP-dependent helicase/deoxyribonuclease subunit B (1099 aa).

The [4Fe-4S] cluster site is built by C766, C1056, C1059, and C1065.

Belongs to the helicase family. AddB/RexB type 2 subfamily. Heterodimer of AddA and RexB. Requires Mg(2+) as cofactor. It depends on [4Fe-4S] cluster as a cofactor.

Functionally, the heterodimer acts as both an ATP-dependent DNA helicase and an ATP-dependent, dual-direction single-stranded exonuclease. Recognizes the chi site generating a DNA molecule suitable for the initiation of homologous recombination. This subunit has 5' -&gt; 3' nuclease activity but not helicase activity. This is ATP-dependent helicase/deoxyribonuclease subunit B from Lactococcus lactis subsp. cremoris (strain SK11).